Here is a 353-residue protein sequence, read N- to C-terminus: Photosystem II protein D1 (353 aa).

Thr2 is subject to N-acetylthreonine. A Phosphothreonine modification is found at Thr2. The next 3 helical transmembrane spans lie at 29-46 (YVGW…TAVS), 118-133 (HFFL…EWEL), and 142-156 (WIAV…AATA). His118 is a binding site for chlorophyll a. Tyr126 is a pheophytin a binding site. Asp170 and Glu189 together coordinate [CaMn4O5] cluster. A helical transmembrane segment spans residues 197–218 (FHMLGVAGVFGGSLFSAMHGSL). His198 contacts chlorophyll a. Residues His215 and 264 to 265 (SF) each bind a quinone. His215 lines the Fe cation pocket. Fe cation is bound at residue His272. A helical transmembrane segment spans residues 274-288 (FLAAWPVVGIWFTAL). Positions 332, 333, 342, and 344 each coordinate [CaMn4O5] cluster. Positions 345–353 (SVEAPSING) are excised as a propeptide.

It belongs to the reaction center PufL/M/PsbA/D family. PSII is composed of 1 copy each of membrane proteins PsbA, PsbB, PsbC, PsbD, PsbE, PsbF, PsbH, PsbI, PsbJ, PsbK, PsbL, PsbM, PsbT, PsbX, PsbY, PsbZ, Psb30/Ycf12, at least 3 peripheral proteins of the oxygen-evolving complex and a large number of cofactors. It forms dimeric complexes. Requires The D1/D2 heterodimer binds P680, chlorophylls that are the primary electron donor of PSII, and subsequent electron acceptors. It shares a non-heme iron and each subunit binds pheophytin, quinone, additional chlorophylls, carotenoids and lipids. D1 provides most of the ligands for the Mn4-Ca-O5 cluster of the oxygen-evolving complex (OEC). There is also a Cl(-1) ion associated with D1 and D2, which is required for oxygen evolution. The PSII complex binds additional chlorophylls, carotenoids and specific lipids. as cofactor. In terms of processing, tyr-161 forms a radical intermediate that is referred to as redox-active TyrZ, YZ or Y-Z. Post-translationally, C-terminally processed by CTPA; processing is essential to allow assembly of the oxygen-evolving complex and thus photosynthetic growth.

It localises to the plastid. It is found in the chloroplast thylakoid membrane. It catalyses the reaction 2 a plastoquinone + 4 hnu + 2 H2O = 2 a plastoquinol + O2. Photosystem II (PSII) is a light-driven water:plastoquinone oxidoreductase that uses light energy to abstract electrons from H(2)O, generating O(2) and a proton gradient subsequently used for ATP formation. It consists of a core antenna complex that captures photons, and an electron transfer chain that converts photonic excitation into a charge separation. The D1/D2 (PsbA/PsbD) reaction center heterodimer binds P680, the primary electron donor of PSII as well as several subsequent electron acceptors. The protein is Photosystem II protein D1 of Tupiella akineta (Green alga).